Reading from the N-terminus, the 242-residue chain is Sugar fermentation stimulation protein homolog (242 aa).

The protein belongs to the SfsA family.

This Nitratidesulfovibrio vulgaris (strain DP4) (Desulfovibrio vulgaris) protein is Sugar fermentation stimulation protein homolog.